We begin with the raw amino-acid sequence, 162 residues long: MRLVEIGRFGAPYALKGGLRFRGEPVVLHLERVYVEGHGWRAIEDLYRVGEELVVHLAGVTDRTLAEALVGLRVYAEVADLPPLEEGRYYYFALIGLPVYVEGRQVGEVVDILDAGAQDVLIIRGVGERLRDRAERLVPLQAPYVRVEEGGIHVDPIPGLFD.

A PRC barrel domain is found at 86 to 160 (EGRYYYFALI…GIHVDPIPGL (75 aa)).

It belongs to the RimM family. As to quaternary structure, binds ribosomal protein uS19.

The protein resides in the cytoplasm. Its function is as follows. An accessory protein needed during the final step in the assembly of 30S ribosomal subunit, possibly for assembly of the head region. Essential for efficient processing of 16S rRNA. May be needed both before and after RbfA during the maturation of 16S rRNA. It has affinity for free ribosomal 30S subunits but not for 70S ribosomes. The polypeptide is Ribosome maturation factor RimM (Thermus thermophilus (strain ATCC BAA-163 / DSM 7039 / HB27)).